The sequence spans 268 residues: MASFGWKRKVGERVSKQTVQQFEQDSEQADEDEVEREGVDWLHVIKRKREVLLEDCAAKSKRLKEEGALLAEQDRNWEALKKWDEAVQLTPEDAVLYEMKSQVLITLGEVFLAVQSAEMATRLRPIWWEAWQTLGRAQLSLGEVELAVRSFQVALHLHPSERPLWEEDLNWALKLRENQQSLREKASQVDEARRLLVEAPELKGDYDFESDEVIEACSAMADRQKQYEDLKKKAVVVDAHGEAKEMLVEGDDNPTSSSQSVLIKARGL.

Positions 14-34 are disordered; the sequence is VSKQTVQQFEQDSEQADEDEV. Acidic residues predominate over residues 24–34; sequence QDSEQADEDEV. TPR repeat units follow at residues 60 to 93, 94 to 127, and 128 to 161; these read SKRL…TPED, AVLY…RPIW, and WEAW…HPSE. The interval 249 to 268 is disordered; the sequence is EGDDNPTSSSQSVLIKARGL.

The protein is Tetratricopeptide repeat protein 33 (ttc33) of Danio rerio (Zebrafish).